The sequence spans 151 residues: Superoxide dismutase [Cu-Zn] A (151 aa).

Cys-6 carries S-palmitoyl cysteine lipidation. Residues His-45, His-47, and His-62 each coordinate Cu cation. A disulfide bridge links Cys-56 with Cys-144. Positions 62, 70, 79, and 82 each coordinate Zn(2+). Cu cation is bound at residue His-118.

Belongs to the Cu-Zn superoxide dismutase family. In terms of assembly, homodimer, and heterodimer of Superoxide dismutase [Cu-Zn] A and B. Cu cation is required as a cofactor. The cofactor is Zn(2+).

The protein resides in the cytoplasm. It localises to the nucleus. It catalyses the reaction 2 superoxide + 2 H(+) = H2O2 + O2. Destroys radicals which are normally produced within the cells and which are toxic to biological systems. This Xenopus laevis (African clawed frog) protein is Superoxide dismutase [Cu-Zn] A (sod1-a).